The chain runs to 189 residues: MTEYKLVVVGAGGVGKSALTIQLIQNHFVDEYDPTIEDSYRKQVVIDGETCLLDILDTAGQEEYSAMRDQYMRTGEGFLCVFAINNSKSFADINLYREQIKRVKDSDDVPMVLVGNKCDLPTRTVDTKQAQELAKSYGIPFIETSAKTRQGVEDAFYTLVREIRQYRMKKLNSNEDGNQGCMGLSCIVM.

10–17 is a binding site for GTP; sequence GAGGVGKS. Positions 32-40 match the Effector region motif; the sequence is YDPTIEDSY. Residues 57 to 61 and 116 to 119 each bind GTP; these read DTAGQ and NKCD. A hypervariable region region spans residues 166 to 185; the sequence is YRMKKLNSNEDGNQGCMGLS. The S-palmitoyl cysteine moiety is linked to residue Cys-181. The S-farnesyl cysteine moiety is linked to residue Cys-186. The propeptide at 187-189 is removed in mature form; sequence IVM.

The protein belongs to the small GTPase superfamily. Ras family. In terms of processing, palmitoylated by the ZDHHC9-GOLGA7 complex. Depalmitoylated by ABHD17A, ABHD17B and ABHD17C. A continuous cycle of de- and re-palmitoylation regulates rapid exchange between plasma membrane and Golgi.

The protein resides in the cell membrane. The protein localises to the golgi apparatus membrane. It catalyses the reaction GTP + H2O = GDP + phosphate + H(+). Its activity is regulated as follows. Alternates between an inactive form bound to GDP and an active form bound to GTP. Activated by a guanine nucleotide-exchange factor (GEF) and inactivated by a GTPase-activating protein (GAP). Its function is as follows. Ras proteins bind GDP/GTP and possess intrinsic GTPase activity. This is GTPase NRas (NRAS) from Gallus gallus (Chicken).